We begin with the raw amino-acid sequence, 155 residues long: 6,7-dimethyl-8-ribityllumazine synthase (155 aa).

5-amino-6-(D-ribitylamino)uracil contacts are provided by residues Phe22, Ala57–Glu59, and Ser81–Ile83. Gly86 to Thr87 contributes to the (2S)-2-hydroxy-3-oxobutyl phosphate binding site. His88 acts as the Proton donor in catalysis. Phe113 is a 5-amino-6-(D-ribitylamino)uracil binding site. (2S)-2-hydroxy-3-oxobutyl phosphate is bound at residue Arg127.

Belongs to the DMRL synthase family. In terms of assembly, forms an icosahedral capsid composed of 60 subunits, arranged as a dodecamer of pentamers.

The enzyme catalyses (2S)-2-hydroxy-3-oxobutyl phosphate + 5-amino-6-(D-ribitylamino)uracil = 6,7-dimethyl-8-(1-D-ribityl)lumazine + phosphate + 2 H2O + H(+). It functions in the pathway cofactor biosynthesis; riboflavin biosynthesis; riboflavin from 2-hydroxy-3-oxobutyl phosphate and 5-amino-6-(D-ribitylamino)uracil: step 1/2. Its function is as follows. Catalyzes the formation of 6,7-dimethyl-8-ribityllumazine by condensation of 5-amino-6-(D-ribitylamino)uracil with 3,4-dihydroxy-2-butanone 4-phosphate. This is the penultimate step in the biosynthesis of riboflavin. The protein is 6,7-dimethyl-8-ribityllumazine synthase of Photobacterium phosphoreum.